A 72-amino-acid chain; its full sequence is Small ribosomal subunit protein bS18 (72 aa).

It belongs to the bacterial ribosomal protein bS18 family. In terms of assembly, part of the 30S ribosomal subunit. Forms a tight heterodimer with protein bS6.

Binds as a heterodimer with protein bS6 to the central domain of the 16S rRNA, where it helps stabilize the platform of the 30S subunit. This is Small ribosomal subunit protein bS18 from Francisella tularensis subsp. holarctica (strain OSU18).